Consider the following 474-residue polypeptide: tRNA-2-methylthio-N(6)-dimethylallyladenosine synthase (474 aa).

The 118-residue stretch at 3-120 (KKLHIKTWGC…LPEMINAVRG (118 aa)) folds into the MTTase N-terminal domain. Positions 12, 49, 83, 157, 161, and 164 each coordinate [4Fe-4S] cluster. The region spanning 143–375 (RADGPTAFVS…QERINQQAMA (233 aa)) is the Radical SAM core domain. The TRAM domain maps to 378-441 (RRMLGTVQRI…TNSLRGKIVR (64 aa)).

This sequence belongs to the methylthiotransferase family. MiaB subfamily. In terms of assembly, monomer. Requires [4Fe-4S] cluster as cofactor.

It localises to the cytoplasm. It carries out the reaction N(6)-dimethylallyladenosine(37) in tRNA + (sulfur carrier)-SH + AH2 + 2 S-adenosyl-L-methionine = 2-methylsulfanyl-N(6)-dimethylallyladenosine(37) in tRNA + (sulfur carrier)-H + 5'-deoxyadenosine + L-methionine + A + S-adenosyl-L-homocysteine + 2 H(+). Functionally, catalyzes the methylthiolation of N6-(dimethylallyl)adenosine (i(6)A), leading to the formation of 2-methylthio-N6-(dimethylallyl)adenosine (ms(2)i(6)A) at position 37 in tRNAs that read codons beginning with uridine. The chain is tRNA-2-methylthio-N(6)-dimethylallyladenosine synthase from Klebsiella pneumoniae (strain 342).